A 1140-amino-acid chain; its full sequence is DNA damage-binding protein 1 (1140 aa).

Belongs to the DDB1 family. As to quaternary structure, component of the UV-DDB complex which includes DDB1 and DDB2; the heterodimer dimerizes to give rise to a heterotetramer when bound to damaged DNA. The UV-DDB complex interacts with monoubiquitinated histone H2A and binds to XPC via the DDB2 subunit. Component of numerous DCX (DDB1-CUL4-X-box) E3 ubiquitin-protein ligase complexes which consist of a core of DDB1, CUL4A or CUL4B and RBX1. DDB1 may recruit specific substrate targeting subunits to the DCX complex. These substrate targeting subunits are generally known as DCAF (DDB1- and CUL4-associated factor) or CDW (CUL4-DDB1-associated WD40-repeat) proteins. Interacts with Fbw5 and gig. May interact with ohgt.

It localises to the cytoplasm. The protein resides in the nucleus. The protein operates within protein modification; protein ubiquitination. Its function is as follows. Protein, which is both involved in DNA repair and protein ubiquitination, as part of the UV-DDB complex and DCX (DDB1-CUL4-X-box) complexes, respectively. Core component of the UV-DDB complex (UV-damaged DNA-binding protein complex), a complex that recognizes UV-induced DNA damage and recruit proteins of the nucleotide excision repair pathway (the NER pathway) to initiate DNA repair. The UV-DDB complex preferentially binds to cyclobutane pyrimidine dimers (CPD), 6-4 photoproducts (6-4 PP), apurinic sites and short mismatches. Also functions as a component of numerous distinct DCX (DDB1-CUL4-X-box) E3 ubiquitin-protein ligase complexes which mediate the ubiquitination and subsequent proteasomal degradation of target proteins. The functional specificity of the DCX E3 ubiquitin-protein ligase complex is determined by the variable substrate recognition component recruited by DDB1. Required for degradation of gig. Required for genomic stability in the face of endogenous DNA lesions and for the response to MMS-induced DNA damage. Required for normal wing development. This Drosophila melanogaster (Fruit fly) protein is DNA damage-binding protein 1 (pic).